The chain runs to 488 residues: Cysteine desulfurase, mitochondrial (488 aa).

The interval 25 to 52 (LPKPLATSSSPATNAPNKTSNPKTGELH) is disordered. Residues 30-47 (ATSSSPATNAPNKTSNPK) show a composition bias toward polar residues. Residues 157–158 (AT), N237, Q265, and 285–287 (SSH) contribute to the pyridoxal 5'-phosphate site. Position 288 is an N6-(pyridoxal phosphate)lysine (K288). Position 325 (T325) interacts with pyridoxal 5'-phosphate. C412 functions as the Cysteine persulfide intermediate in the catalytic mechanism. C412 contributes to the [2Fe-2S] cluster binding site.

This sequence belongs to the class-V pyridoxal-phosphate-dependent aminotransferase family. NifS/IscS subfamily. Requires pyridoxal 5'-phosphate as cofactor.

The protein localises to the mitochondrion. The enzyme catalyses (sulfur carrier)-H + L-cysteine = (sulfur carrier)-SH + L-alanine. Functionally, catalyzes the removal of elemental sulfur from cysteine to produce alanine. It supplies the inorganic sulfur for iron-sulfur (Fe-S) clusters. Plays a role in both tRNA-processing and mitochondrial metabolism. Involved in the 2-thio-modification of both 5-carboxymethylaminomethyl-2-thiouridine in mitochondrial tRNAs and 5-methoxycarbonylmethyl-2-thiouridine (mcm5s2U) in cytoplasmic tRNAs. This chain is Cysteine desulfurase, mitochondrial (NFS1), found in Candida albicans (strain SC5314 / ATCC MYA-2876) (Yeast).